We begin with the raw amino-acid sequence, 98 residues long: Large ribosomal subunit protein uL23 (98 aa).

The protein belongs to the universal ribosomal protein uL23 family. As to quaternary structure, part of the 50S ribosomal subunit. Contacts protein L29, and trigger factor when it is bound to the ribosome.

One of the early assembly proteins it binds 23S rRNA. One of the proteins that surrounds the polypeptide exit tunnel on the outside of the ribosome. Forms the main docking site for trigger factor binding to the ribosome. This is Large ribosomal subunit protein uL23 from Streptococcus pyogenes serotype M1.